A 524-amino-acid chain; its full sequence is M phase phosphoprotein 10 (524 aa).

Positions 85 to 92 match the Nuclear localization signal 1 motif; the sequence is VKRFAKNP. 2 disordered regions span residues 100 to 243 and 259 to 283; these read KLAL…KLGK and KLKD…STHE. The segment covering 109 to 168 has biased composition (acidic residues); it reads DDIDEMDMDGFDSDDVDDEDKEIESNDSEGEDEEEEEEDEEEEEEEEEEEEEEKDGDNEG. Positions 131–165 form a coiled coil; that stretch reads IESNDSEGEDEEEEEEDEEEEEEEEEEEEEEKDGD. Positions 169–180 are enriched in basic and acidic residues; it reads IEDKFFKIKELE. Residues 181–191 show a composition bias toward acidic residues; it reads EFLEEGEAEEY. Over residues 196–207 the composition is skewed to basic residues; sequence KNKKGVAQRKKQ. A compositionally biased stretch (acidic residues) spans 210–238; sequence SDDEDEEDDDDEEEDVEFDAFAGGDDEET. The stretch at 257–302 forms a coiled coil; that stretch reads KMKLKDLSEDEEAEIENKGNEKLSTHERARLKLQSKIEQMEKANLD. Basic and acidic residues predominate over residues 271–283; it reads IENKGNEKLSTHE. The short motif at 373-380 is the Nuclear localization signal 2 element; sequence GKREAKEL. The tract at residues 479 to 524 is disordered; that stretch reads KGDIKDESELTQEDRKRRRANKKRKFKAESANEPPKKALDTSTKNP. Basic and acidic residues predominate over residues 480–493; the sequence is GDIKDESELTQEDR. The segment covering 494–504 has biased composition (basic residues); that stretch reads KRRRANKKRKF. Residues 505–517 are compositionally biased toward basic and acidic residues; the sequence is KAESANEPPKKAL.

It belongs to the MPP10 family. In terms of assembly, component of the ribosomal small subunit (SSU) processome. Interacts with THAL in the nucleus.

The protein resides in the nucleus. It localises to the nucleolus. Its function is as follows. Involved in nucleolar processing of pre-18S ribosomal RNA. This Arabidopsis thaliana (Mouse-ear cress) protein is M phase phosphoprotein 10.